Reading from the N-terminus, the 614-residue chain is Phosphomethylpyrimidine synthase (614 aa).

Residues asparagine 226, methionine 255, tyrosine 284, histidine 320, 340–342, 381–384, and glutamate 420 each bind substrate; these read SRG and DGLR. Histidine 424 provides a ligand contact to Zn(2+). Tyrosine 447 lines the substrate pocket. Residue histidine 488 participates in Zn(2+) binding. Residues cysteine 568, cysteine 571, and cysteine 576 each coordinate [4Fe-4S] cluster.

This sequence belongs to the ThiC family. Homodimer. Requires [4Fe-4S] cluster as cofactor.

It catalyses the reaction 5-amino-1-(5-phospho-beta-D-ribosyl)imidazole + S-adenosyl-L-methionine = 4-amino-2-methyl-5-(phosphooxymethyl)pyrimidine + CO + 5'-deoxyadenosine + formate + L-methionine + 3 H(+). The protein operates within cofactor biosynthesis; thiamine diphosphate biosynthesis. In terms of biological role, catalyzes the synthesis of the hydroxymethylpyrimidine phosphate (HMP-P) moiety of thiamine from aminoimidazole ribotide (AIR) in a radical S-adenosyl-L-methionine (SAM)-dependent reaction. This chain is Phosphomethylpyrimidine synthase, found in Acidovorax ebreus (strain TPSY) (Diaphorobacter sp. (strain TPSY)).